Reading from the N-terminus, the 809-residue chain is Ribosome biogenesis protein ERB1 (809 aa).

The tract at residues 1 to 107 is disordered; sequence MSKSSKVGMT…SDTRSITDAI (107 aa). Acidic residues-rich tracts occupy residues 30–70 and 77–97; these read AEVD…EDSD and LGEE…EPQE. Residues 267-383 are required for interaction with NOP7; it reads RFVPSKHEAK…LRKVPGYQES (117 aa). Residues 383-419 are required for interaction with YTM1; the sequence is SVRERFERCLDLYLAPRVRHNKLNIDPESLIPELPSP. WD repeat units lie at residues 435–474 and 483–523; these read GHTD…QVFN and NDED…FDIE. The interval 545–569 is disordered; sequence EEKFKNDEGNEDEDDEDDSATSTAV. Over residues 553–563 the composition is skewed to acidic residues; that stretch reads GNEDEDDEDDS. WD repeat units lie at residues 593–635, 638–676, 679–718, 722–762, and 778–809; these read QCRK…SQSP, KSKG…LVKK, PGVR…TPYK, YHEK…DLMT, and VNSI…LWTT.

It belongs to the WD repeat BOP1/ERB1 family. In terms of assembly, component of the NOP7 complex, composed of ERB1, NOP7 and YTM1. The complex is held together by ERB1, which interacts with NOP7 via its N-terminal domain and with YTM1 via a high-affinity interaction between the seven-bladed beta-propeller domains of the 2 proteins. The NOP7 complex associates with the 66S pre-ribosome.

Its subcellular location is the nucleus. It localises to the nucleolus. It is found in the nucleoplasm. Functionally, component of the NOP7 complex, which is required for maturation of the 25S and 5.8S ribosomal RNAs and formation of the 60S ribosome. In Scheffersomyces stipitis (strain ATCC 58785 / CBS 6054 / NBRC 10063 / NRRL Y-11545) (Yeast), this protein is Ribosome biogenesis protein ERB1.